The following is a 271-amino-acid chain: Undecaprenyl-diphosphatase (271 aa).

The next 8 helical transmembrane spans lie at 2–22 (LLILKAIILAIVEGLTEFVPV), 42–62 (ANLFNVVIQLGAILAVVVVYW), 80–100 (LRFWINIVVACIPAVIFGFSL), 108–128 (LFNPITVAIGLVIGGILMIIV), 149–168 (SIFVGMFQCLALWPGMSRSA), 175–195 (WIAGLSPVVAAEFSFFLAIPV), 214–234 (IEFIALIVGFVGAFLVSLVVI), and 248–268 (IFAIYRIFIGAILLILAIFKI).

This sequence belongs to the UppP family.

It localises to the cell membrane. It carries out the reaction di-trans,octa-cis-undecaprenyl diphosphate + H2O = di-trans,octa-cis-undecaprenyl phosphate + phosphate + H(+). In terms of biological role, catalyzes the dephosphorylation of undecaprenyl diphosphate (UPP). Confers resistance to bacitracin. This is Undecaprenyl-diphosphatase from Clostridium tetani (strain Massachusetts / E88).